A 661-amino-acid chain; its full sequence is UvrABC system protein B (661 aa).

One can recognise a Helicase ATP-binding domain in the interval 25–182; that stretch reads KGLNNKKRSQ…NDLVNLQYER (158 aa). 38–45 lines the ATP pocket; the sequence is GITGSGKT. The Beta-hairpin signature appears at 91–114; sequence YYDYYQPEAYIPKTDVFIEKDSSI. Positions 430-592 constitute a Helicase C-terminal domain; the sequence is QVEDLVGEIQ…IIPKTINRTI (163 aa). A UVR domain is found at 621–656; it reads KAHIDKLRKEMLKAASNLEFEQAAKLRDQLKTLEEA.

Belongs to the UvrB family. In terms of assembly, forms a heterotetramer with UvrA during the search for lesions. Interacts with UvrC in an incision complex.

The protein localises to the cytoplasm. In terms of biological role, the UvrABC repair system catalyzes the recognition and processing of DNA lesions. A damage recognition complex composed of 2 UvrA and 2 UvrB subunits scans DNA for abnormalities. Upon binding of the UvrA(2)B(2) complex to a putative damaged site, the DNA wraps around one UvrB monomer. DNA wrap is dependent on ATP binding by UvrB and probably causes local melting of the DNA helix, facilitating insertion of UvrB beta-hairpin between the DNA strands. Then UvrB probes one DNA strand for the presence of a lesion. If a lesion is found the UvrA subunits dissociate and the UvrB-DNA preincision complex is formed. This complex is subsequently bound by UvrC and the second UvrB is released. If no lesion is found, the DNA wraps around the other UvrB subunit that will check the other stand for damage. The sequence is that of UvrABC system protein B from Rickettsia bellii (strain OSU 85-389).